A 247-amino-acid polypeptide reads, in one-letter code: ATP synthase subunit a, chloroplastic (247 aa).

5 helical membrane-spanning segments follow: residues 38 to 58 (QVLI…TVAV), 95 to 115 (VPFI…GALL), 134 to 154 (INTT…AGLT), 199 to 219 (LVVV…VMFL), and 220 to 240 (GLFT…AYIG).

Belongs to the ATPase A chain family. In terms of assembly, F-type ATPases have 2 components, CF(1) - the catalytic core - and CF(0) - the membrane proton channel. CF(1) has five subunits: alpha(3), beta(3), gamma(1), delta(1), epsilon(1). CF(0) has four main subunits: a, b, b' and c.

The protein resides in the plastid. The protein localises to the chloroplast thylakoid membrane. Its function is as follows. Key component of the proton channel; it plays a direct role in the translocation of protons across the membrane. The chain is ATP synthase subunit a, chloroplastic from Acorus calamus var. americanus (American sweet flag).